We begin with the raw amino-acid sequence, 362 residues long: 3-dehydroquinate synthase (362 aa).

NAD(+) is bound by residues 74–79, 108–112, 132–133, Lys-145, Lys-154, and 172–175; these read DGEGYK, GVIGD, TT, and TLDT. Glu-187, His-250, and His-267 together coordinate Zn(2+).

This sequence belongs to the sugar phosphate cyclases superfamily. Dehydroquinate synthase family. It depends on Co(2+) as a cofactor. The cofactor is Zn(2+). NAD(+) is required as a cofactor.

It is found in the cytoplasm. It catalyses the reaction 7-phospho-2-dehydro-3-deoxy-D-arabino-heptonate = 3-dehydroquinate + phosphate. The protein operates within metabolic intermediate biosynthesis; chorismate biosynthesis; chorismate from D-erythrose 4-phosphate and phosphoenolpyruvate: step 2/7. Catalyzes the conversion of 3-deoxy-D-arabino-heptulosonate 7-phosphate (DAHP) to dehydroquinate (DHQ). The sequence is that of 3-dehydroquinate synthase from Geobacter sp. (strain M21).